Here is a 679-residue protein sequence, read N- to C-terminus: Glycine--tRNA ligase beta subunit (679 aa).

It belongs to the class-II aminoacyl-tRNA synthetase family. As to quaternary structure, tetramer of two alpha and two beta subunits.

Its subcellular location is the cytoplasm. It catalyses the reaction tRNA(Gly) + glycine + ATP = glycyl-tRNA(Gly) + AMP + diphosphate. The sequence is that of Glycine--tRNA ligase beta subunit from Thermodesulfovibrio yellowstonii (strain ATCC 51303 / DSM 11347 / YP87).